The chain runs to 257 residues: Pyridoxine 5'-phosphate synthase (257 aa).

Asparagine 6 is a 3-amino-2-oxopropyl phosphate binding site. 1-deoxy-D-xylulose 5-phosphate is bound at residue 8 to 9 (DH). Arginine 17 lines the 3-amino-2-oxopropyl phosphate pocket. Histidine 41 serves as the catalytic Proton acceptor. 1-deoxy-D-xylulose 5-phosphate is bound by residues arginine 43 and histidine 48. The active-site Proton acceptor is the glutamate 68. 1-deoxy-D-xylulose 5-phosphate is bound at residue threonine 98. The active-site Proton donor is the histidine 210. Residues glycine 211 and 232-233 (GQ) contribute to the 3-amino-2-oxopropyl phosphate site.

Belongs to the PNP synthase family. In terms of assembly, homooctamer; tetramer of dimers.

The protein localises to the cytoplasm. The catalysed reaction is 3-amino-2-oxopropyl phosphate + 1-deoxy-D-xylulose 5-phosphate = pyridoxine 5'-phosphate + phosphate + 2 H2O + H(+). Its pathway is cofactor biosynthesis; pyridoxine 5'-phosphate biosynthesis; pyridoxine 5'-phosphate from D-erythrose 4-phosphate: step 5/5. Functionally, catalyzes the complicated ring closure reaction between the two acyclic compounds 1-deoxy-D-xylulose-5-phosphate (DXP) and 3-amino-2-oxopropyl phosphate (1-amino-acetone-3-phosphate or AAP) to form pyridoxine 5'-phosphate (PNP) and inorganic phosphate. The protein is Pyridoxine 5'-phosphate synthase of Campylobacter jejuni (strain RM1221).